The chain runs to 312 residues: Urease accessory protein UreD (312 aa).

Basic and acidic residues predominate over residues 1-15 (MLAEQFTDKNKHAEQ). The disordered stretch occupies residues 1–24 (MLAEQFTDKNKHAEQELSPGSSAV).

Belongs to the UreD family. As to quaternary structure, ureD, UreF and UreG form a complex that acts as a GTP-hydrolysis-dependent molecular chaperone, activating the urease apoprotein by helping to assemble the nickel containing metallocenter of UreC. The UreE protein probably delivers the nickel.

It localises to the cytoplasm. Its function is as follows. Required for maturation of urease via the functional incorporation of the urease nickel metallocenter. The chain is Urease accessory protein UreD from Hahella chejuensis (strain KCTC 2396).